We begin with the raw amino-acid sequence, 650 residues long: Phosphomethylpyrimidine synthase (650 aa).

Substrate is bound by residues Asn-241, Met-270, Tyr-299, His-335, 355-357 (SRG), 396-399 (DGLR), and Glu-435. A Zn(2+)-binding site is contributed by His-439. Tyr-462 lines the substrate pocket. His-503 is a binding site for Zn(2+). Residues Cys-583, Cys-586, and Cys-591 each contribute to the [4Fe-4S] cluster site.

Belongs to the ThiC family. In terms of assembly, homodimer. [4Fe-4S] cluster serves as cofactor.

The enzyme catalyses 5-amino-1-(5-phospho-beta-D-ribosyl)imidazole + S-adenosyl-L-methionine = 4-amino-2-methyl-5-(phosphooxymethyl)pyrimidine + CO + 5'-deoxyadenosine + formate + L-methionine + 3 H(+). Its pathway is cofactor biosynthesis; thiamine diphosphate biosynthesis. In terms of biological role, catalyzes the synthesis of the hydroxymethylpyrimidine phosphate (HMP-P) moiety of thiamine from aminoimidazole ribotide (AIR) in a radical S-adenosyl-L-methionine (SAM)-dependent reaction. The protein is Phosphomethylpyrimidine synthase of Pseudoalteromonas translucida (strain TAC 125).